A 203-amino-acid chain; its full sequence is ATP-dependent Clp protease proteolytic subunit (203 aa).

Catalysis depends on serine 107, which acts as the Nucleophile. Histidine 132 is a catalytic residue.

This sequence belongs to the peptidase S14 family. As to quaternary structure, fourteen ClpP subunits assemble into 2 heptameric rings which stack back to back to give a disk-like structure with a central cavity, resembling the structure of eukaryotic proteasomes.

It is found in the cytoplasm. The enzyme catalyses Hydrolysis of proteins to small peptides in the presence of ATP and magnesium. alpha-casein is the usual test substrate. In the absence of ATP, only oligopeptides shorter than five residues are hydrolyzed (such as succinyl-Leu-Tyr-|-NHMec, and Leu-Tyr-Leu-|-Tyr-Trp, in which cleavage of the -Tyr-|-Leu- and -Tyr-|-Trp bonds also occurs).. In terms of biological role, cleaves peptides in various proteins in a process that requires ATP hydrolysis. Has a chymotrypsin-like activity. Plays a major role in the degradation of misfolded proteins. The polypeptide is ATP-dependent Clp protease proteolytic subunit (Shewanella woodyi (strain ATCC 51908 / MS32)).